A 155-amino-acid polypeptide reads, in one-letter code: NADPH-dependent 7-cyano-7-deazaguanine reductase (155 aa).

Residues M1–A20 show a composition bias toward polar residues. The interval M1 to A26 is disordered. C53 functions as the Thioimide intermediate in the catalytic mechanism. The active-site Proton donor is D60. Substrate is bound by residues V75–S77 and H94–E95.

It belongs to the GTP cyclohydrolase I family. QueF type 1 subfamily.

It is found in the cytoplasm. It carries out the reaction 7-aminomethyl-7-carbaguanine + 2 NADP(+) = 7-cyano-7-deazaguanine + 2 NADPH + 3 H(+). The protein operates within tRNA modification; tRNA-queuosine biosynthesis. Its function is as follows. Catalyzes the NADPH-dependent reduction of 7-cyano-7-deazaguanine (preQ0) to 7-aminomethyl-7-deazaguanine (preQ1). The polypeptide is NADPH-dependent 7-cyano-7-deazaguanine reductase (Rhizobium etli (strain CIAT 652)).